We begin with the raw amino-acid sequence, 1208 residues long: DNA-directed RNA polymerase subunit beta (1208 aa).

It belongs to the RNA polymerase beta chain family. The RNAP catalytic core consists of 2 alpha, 1 beta, 1 beta' and 1 omega subunit. When a sigma factor is associated with the core the holoenzyme is formed, which can initiate transcription.

The enzyme catalyses RNA(n) + a ribonucleoside 5'-triphosphate = RNA(n+1) + diphosphate. Functionally, DNA-dependent RNA polymerase catalyzes the transcription of DNA into RNA using the four ribonucleoside triphosphates as substrates. In Enterococcus faecium (Streptococcus faecium), this protein is DNA-directed RNA polymerase subunit beta.